A 512-amino-acid chain; its full sequence is Ascofuranone/ascochlorin biosynthesis clusters transcription regulator (512 aa).

Residues 14-49 (CDRCHSQKLRCPRSVEPEKANPEEPCSRCRKAGVPC) constitute a DNA-binding region (zn(2)-C6 fungal-type). Disordered regions lie at residues 54–87 (RGKVGRPSKATKKKSARSPRATSTPEAEFPPYDI), 118–148 (GSGSVTTSASPKTMAEDYQPEGQRPFPDPLM), and 325–351 (GCTRSSSRASTTSKGSSMESDEGDGSI). The span at 56–70 (KVGRPSKATKKKSAR) shows a compositional bias: basic residues. 2 stretches are compositionally biased toward low complexity: residues 118-127 (GSGSVTTSAS) and 327-342 (TRSSSRASTTSKGSSM).

Its subcellular location is the nucleus. Its function is as follows. Transcription factor that regulates the expression of the asc-1 and asc-2 gene clusters that mediate the biosynthesis of both ascochlorin and ascofuranone, a strong inhibitor of cyanide-insensitive alternative oxidases and a promising drug candidate against African trypanosomiasis. Binds the 5'-CGGYGNNTTW-3' motif within promoters of the target genes. The sequence is that of Ascofuranone/ascochlorin biosynthesis clusters transcription regulator from Acremonium egyptiacum (Oospora egyptiaca).